A 694-amino-acid polypeptide reads, in one-letter code: Follicle-stimulating hormone receptor (694 aa).

Positions 1-17 (MAFLWISFLVFLGSGSG) are cleaved as a signal peptide. 2 cysteine pairs are disulfide-bonded: cysteine 18–cysteine 25 and cysteine 23–cysteine 32. The region spanning 18–46 (CHHRICHCSDRVFICQESKVTEIPSDIPR) is the LRRNT domain. Over 18-367 (CHHRICHCSD…EDIMGYNFLR (350 aa)) the chain is Extracellular. LRR repeat units follow at residues 49-72 (VEMR…FRDL), 73-97 (EKIE…LPKL), 98-118 (HEIR…AFWN), 119-143 (LPNL…KIQS), 144-169 (HQKV…AGLS), 170-192 (SESE…AFNG), 193-216 (TQLD…IFQG), 217-240 (ANGP…GLKN), and 241-259 (LKKL…PNLD). N-linked (GlcNAc...) asparagine glycans are attached at residues asparagine 191 and asparagine 199. N-linked (GlcNAc...) asparagine glycosylation is present at asparagine 268. 4 disulfide bridges follow: cysteine 275/cysteine 347, cysteine 276/cysteine 292, cysteine 276/cysteine 357, and cysteine 292/cysteine 339. An N-linked (GlcNAc...) asparagine glycan is attached at asparagine 293. Tyrosine 336 is modified (sulfotyrosine). A helical transmembrane segment spans residues 368–388 (VLIWFISILSITGNIVVLVIL). Residues 389–399 (ITSQYKLTVPR) are Cytoplasmic-facing. The chain crosses the membrane as a helical span at residues 400–422 (FLMCNLAFADLCIGIYLLLIASV). Over 423–444 (DIHTKSQYHNYAIDWQTGAGCD) the chain is Extracellular. A disulfide bridge connects residues cysteine 443 and cysteine 518. The chain crosses the membrane as a helical span at residues 445–466 (AAGFFTVFASELSVYTLTAITL). The Cytoplasmic segment spans residues 467-486 (ERWHTITYAMQLDRKVRLRH). A helical membrane pass occupies residues 487-509 (AASIMLIGWIFAFSVALLPIFGV). At 510 to 529 (SSYMKVSICLPMDIDSPLSQ) the chain is on the extracellular side. The chain crosses the membrane as a helical span at residues 530–551 (FYVISLLVLNVLASVIICTCYT). Residues 552-574 (HIYFTVRNPNIISSTSDAKIAKR) lie on the Cytoplasmic side of the membrane. Residues 575–598 (MAMLIFTDFLCMAPISFFAISASV) form a helical membrane-spanning segment. Residues 599–609 (KMPLITVSKSK) lie on the Extracellular side of the membrane. The helical transmembrane segment at 610-631 (ILLVLFYPINSCANPFLYAVFT) threads the bilayer. Over 632-694 (KTFRRDFFIL…YKLVPLNHLS (63 aa)) the chain is Cytoplasmic.

Belongs to the G-protein coupled receptor 1 family. FSH/LSH/TSH subfamily. In terms of assembly, homotrimer. Functions as a homotrimer binding the FSH hormone heterodimer composed of CGA and FSHB. Interacts with ARRB2. Interacts with APPL2; interaction is independent of follicle stimulating hormone stimulation. In terms of processing, N-glycosylated; indirectly required for FSH-binding, possibly via a conformational change that allows high affinity binding of hormone. Post-translationally, sulfated.

The protein localises to the cell membrane. Its function is as follows. G protein-coupled receptor for follitropin, the follicle-stimulating hormone. Through cAMP production activates the downstream PI3K-AKT and ERK1/ERK2 signaling pathways. In Notamacropus eugenii (Tammar wallaby), this protein is Follicle-stimulating hormone receptor (FSHR).